Consider the following 168-residue polypeptide: Protein GRIM REAPER (168 aa).

A signal peptide spans 1–30 (MVIKIPNTFIKATSLLSLILYFLIIATSKS). The N-linked (GlcNAc...) asparagine glycan is linked to asparagine 59.

It belongs to the STIG1 family. As to quaternary structure, interacts with PRK5 and to a lower extent with PRK4. As to expression, highly expressed in flowers, and at very low levels in leaves.

It is found in the secreted. The protein localises to the extracellular space. Its subcellular location is the apoplast. In terms of biological role, involved in the regulation of cell death induced by extracellular reactive oxygen species. Only the processed peptide, and not the full length GRI can bind in vivo to the extracellular domain of the receptor PRK5. The GRIp-induced cell death is superoxide and salicylic acid dependent. This Arabidopsis thaliana (Mouse-ear cress) protein is Protein GRIM REAPER.